The chain runs to 1204 residues: Exportin-5 (1204 aa).

Residue alanine 2 is modified to N-acetylalanine. The tract at residues 2–108 is necessary for interaction with Ran; the sequence is AMDQVNALCE…ANGTLNILEE (107 aa). An N6-acetyllysine modification is found at lysine 396. A necessary for interaction with ILF3 region spans residues 533–640; sequence ELLQMVLNFD…KQLLSNELLL (108 aa). The tract at residues 641 to 642 is pre-miRNA binding; sequence TQ. Residue serine 826 is modified to Phosphoserine.

Belongs to the exportin family. In terms of assembly, component of a nuclear export receptor complex composed of XPO5, RAN, dsRNA-binding proteins and dsRNA. Found in a nuclear export complex with XPO5, RAN, EEF1A1, and aminoacylated tRNA. Found in a nuclear export complex with XPO5, RAN, ILF3 and dsRNA. Found in a nuclear export complex with XPO5, RAN and pre-miRNA. Found in a nuclear export complex with XPO5, RAN, ILF3 and minihelix VA1 dsRNA. Found in a nuclear export complex with XPO5, RAN, ILF3, ZNF346 and dsRNA. Interacts with EEF1A1, ILF3, NUP153, NUP214 and ZNF346. Interacts with RAN and cargo proteins in a GTP-dependent manner. Interacts with isoform 5 of ADAR/ADAR1 (via DRBM domains). Interacts with SMAD4; mediates nuclear export of SMAD4. Interacts with RAN (GTP-bound form). In terms of tissue distribution, expressed in heart, brain, placenta, lung, skeletal muscle, kidney and pancreas.

Its subcellular location is the nucleus. It is found in the cytoplasm. Mediates the nuclear export of proteins bearing a double-stranded RNA binding domain (dsRBD) and double-stranded RNAs (cargos). XPO5 in the nucleus binds cooperatively to the RNA and to the GTPase Ran in its active GTP-bound form. Proteins containing dsRBDs can associate with this trimeric complex through the RNA. Docking of this complex to the nuclear pore complex (NPC) is mediated through binding to nucleoporins. Upon transit of a nuclear export complex into the cytoplasm, hydrolysis of Ran-GTP to Ran-GDP (induced by RANBP1 and RANGAP1, respectively) cause disassembly of the complex and release of the cargo from the export receptor. XPO5 then returns to the nuclear compartment by diffusion through the nuclear pore complex, to mediate another round of transport. The directionality of nuclear export is thought to be conferred by an asymmetric distribution of the GTP- and GDP-bound forms of Ran between the cytoplasm and nucleus. Overexpression may in some circumstances enhance RNA-mediated gene silencing (RNAi). Mediates nuclear export of isoform 5 of ADAR/ADAR1 in a RanGTP-dependent manner. In terms of biological role, mediates the nuclear export of micro-RNA precursors, which form short hairpins. Also mediates the nuclear export of synthetic short hairpin RNAs used for RNA interference. In some circumstances can also mediate the nuclear export of deacylated and aminoacylated tRNAs. Specifically recognizes dsRNAs that lack a 5'-overhang in a sequence-independent manner, have only a short 3'-overhang, and that have a double-stranded length of at least 15 base-pairs. Binding is dependent on Ran-GTP. Its function is as follows. (Microbial infection) Mediates the nuclear export of adenovirus VA1 dsRNA. In Homo sapiens (Human), this protein is Exportin-5 (XPO5).